The sequence spans 350 residues: Phosphotriesterase-related protein (350 aa).

Positions 22, 24, 169, 201, 230, and 298 each coordinate a divalent metal cation.

The protein belongs to the metallo-dependent hydrolases superfamily. Phosphotriesterase family. A divalent metal cation is required as a cofactor.

In Drosophila melanogaster (Fruit fly), this protein is Phosphotriesterase-related protein.